Reading from the N-terminus, the 261-residue chain is 5'-nucleotidase SurE (261 aa).

Residues aspartate 8, aspartate 9, serine 39, and asparagine 94 each coordinate a divalent metal cation.

This sequence belongs to the SurE nucleotidase family. A divalent metal cation is required as a cofactor.

Its subcellular location is the cytoplasm. It carries out the reaction a ribonucleoside 5'-phosphate + H2O = a ribonucleoside + phosphate. Its function is as follows. Nucleotidase that shows phosphatase activity on nucleoside 5'-monophosphates. The protein is 5'-nucleotidase SurE of Methanopyrus kandleri (strain AV19 / DSM 6324 / JCM 9639 / NBRC 100938).